A 753-amino-acid chain; its full sequence is Fatty acid oxidation complex subunit alpha (753 aa).

An enoyl-CoA hydratase region spans residues 8 to 197 (SVTHPAFTLN…KMGLVDDVVP (190 aa)). The segment at 313–747 (RAIHRVGVLG…FYPVDANIDE (435 aa)) is 3-hydroxyacyl-CoA dehydrogenase. The segment at 593–622 (SNPTLHSNSTKNSSPTKNGNSPAKRNSFKW) is disordered. Residues 599–614 (SNSTKNSSPTKNGNSP) show a composition bias toward low complexity.

This sequence in the N-terminal section; belongs to the enoyl-CoA hydratase/isomerase family. In the central section; belongs to the 3-hydroxyacyl-CoA dehydrogenase family. As to quaternary structure, heterotetramer of two alpha chains (FadJ) and two beta chains (FadI).

The protein localises to the cytoplasm. The catalysed reaction is a (3S)-3-hydroxyacyl-CoA = a (2E)-enoyl-CoA + H2O. It carries out the reaction a 4-saturated-(3S)-3-hydroxyacyl-CoA = a (3E)-enoyl-CoA + H2O. It catalyses the reaction a (3S)-3-hydroxyacyl-CoA + NAD(+) = a 3-oxoacyl-CoA + NADH + H(+). The enzyme catalyses (3S)-3-hydroxybutanoyl-CoA = (3R)-3-hydroxybutanoyl-CoA. The protein operates within lipid metabolism; fatty acid beta-oxidation. Functionally, catalyzes the formation of a hydroxyacyl-CoA by addition of water on enoyl-CoA. Also exhibits 3-hydroxyacyl-CoA epimerase and 3-hydroxyacyl-CoA dehydrogenase activities. This is Fatty acid oxidation complex subunit alpha from Yersinia pseudotuberculosis serotype I (strain IP32953).